Consider the following 175-residue polypeptide: uncharacterized protein (175 aa).

A coiled-coil region spans residues 107 to 138; the sequence is KTEEEAEKTLQEIERKIFKKLWENLDKERKRE.

This is an uncharacterized protein from Aquifex aeolicus (strain VF5).